Reading from the N-terminus, the 227-residue chain is Lipoprotein-releasing system ATP-binding protein LolD (227 aa).

In terms of domain architecture, ABC transporter spans 7 to 227 (LKLTGVERHY…TISDGKVVEF (221 aa)). 43-50 (APSGTGKS) lines the ATP pocket.

Belongs to the ABC transporter superfamily. Lipoprotein translocase (TC 3.A.1.125) family. In terms of assembly, the complex is composed of two ATP-binding proteins (LolD) and two transmembrane proteins (LolC and LolE).

It is found in the cell inner membrane. Its function is as follows. Part of the ABC transporter complex LolCDE involved in the translocation of mature outer membrane-directed lipoproteins, from the inner membrane to the periplasmic chaperone, LolA. Responsible for the formation of the LolA-lipoprotein complex in an ATP-dependent manner. The polypeptide is Lipoprotein-releasing system ATP-binding protein LolD (Rhizobium etli (strain ATCC 51251 / DSM 11541 / JCM 21823 / NBRC 15573 / CFN 42)).